Consider the following 203-residue polypeptide: Large ribosomal subunit protein bL25 (203 aa).

Positions 1–21 are disordered; it reads MMENLQVNQREKKTRHSSRQC. A compositionally biased stretch (basic residues) spans 12-21; that stretch reads KKTRHSSRQC.

This sequence belongs to the bacterial ribosomal protein bL25 family. CTC subfamily. In terms of assembly, part of the 50S ribosomal subunit; part of the 5S rRNA/L5/L18/L25 subcomplex. Contacts the 5S rRNA. Binds to the 5S rRNA independently of L5 and L18.

Its function is as follows. This is one of the proteins that binds to the 5S RNA in the ribosome where it forms part of the central protuberance. The polypeptide is Large ribosomal subunit protein bL25 (Clostridium perfringens (strain 13 / Type A)).